An 80-amino-acid polypeptide reads, in one-letter code: Putative defensin-like protein 28 (80 aa).

The N-terminal stretch at Met-1–Gly-22 is a signal peptide.

The protein belongs to the DEFL family.

It is found in the secreted. The sequence is that of Putative defensin-like protein 28 from Arabidopsis thaliana (Mouse-ear cress).